A 330-amino-acid chain; its full sequence is Autoinducer 2 import system permease protein LsrD (330 aa).

Over 1–4 the chain is Cytoplasmic; that stretch reads MRIR. A helical membrane pass occupies residues 5–25; sequence YGWELALAALLVIEIVSFGAI. At 26–42 the chain is on the periplasmic side; the sequence is NPRMLDLNMLLFSTSDF. A helical membrane pass occupies residues 43 to 63; sequence ICIGIVALPLTMVIVSGGIDI. The Cytoplasmic portion of the chain corresponds to 64-67; the sequence is SFGS. 2 consecutive transmembrane segments (helical) span residues 68–88 and 89–109; these read TIGLCAIALGVLFQSGVPMPL and AILLTLLLGALCGLINAGLII. The Cytoplasmic segment spans residues 110-115; that stretch reads YTKVNP. A helical transmembrane segment spans residues 116–136; sequence LVITLGTLYLFAGSALLLSGM. At 137–159 the chain is on the periplasmic side; the sequence is AGATGYEGIGGFPMAFTDFANLD. Residues 160-180 traverse the membrane as a helical segment; it reads VLGLPVPLIIFLICLLVFWLW. The Cytoplasmic portion of the chain corresponds to 181–209; that stretch reads LHKTHAGRNVFLIGQSPRVALYSAIPVNR. Residues 210–230 form a helical membrane-spanning segment; it reads TLCALYAMTGLASAVAAVLLV. Topologically, residues 231-237 are periplasmic; that stretch reads SYFGSAR. 2 helical membrane passes run 238–258 and 259–279; these read SDLGASFLMPAITAVVLGGAN and IYGGSGAIIGTAIAVLLVGYL. Over 280-285 the chain is Periplasmic; sequence QQGLQM. Residues 286-306 traverse the membrane as a helical segment; that stretch reads AGVPNQVSSALSGALLIVVVV. Residues 307–330 lie on the Cytoplasmic side of the membrane; that stretch reads GRSVSLHRQQIKEWLARRANNPLP.

The protein belongs to the binding-protein-dependent transport system permease family. AraH/RbsC subfamily. In terms of assembly, the complex is composed of two ATP-binding proteins (LsrA), two transmembrane proteins (LsrC and LsrD) and a solute-binding protein (LsrB).

It is found in the cell inner membrane. Part of the ABC transporter complex LsrABCD involved in autoinducer 2 (AI-2) import. Probably responsible for the translocation of the substrate across the membrane. This Escherichia coli O157:H7 protein is Autoinducer 2 import system permease protein LsrD (lsrD).